Consider the following 138-residue polypeptide: Ribosome-binding factor A (138 aa).

Positions 117–138 are disordered; sequence AEDGQHQEGPASADAKPESTEE.

It belongs to the RbfA family. In terms of assembly, monomer. Binds 30S ribosomal subunits, but not 50S ribosomal subunits or 70S ribosomes.

The protein localises to the cytoplasm. One of several proteins that assist in the late maturation steps of the functional core of the 30S ribosomal subunit. Associates with free 30S ribosomal subunits (but not with 30S subunits that are part of 70S ribosomes or polysomes). Required for efficient processing of 16S rRNA. May interact with the 5'-terminal helix region of 16S rRNA. This is Ribosome-binding factor A from Pseudomonas syringae pv. syringae (strain B728a).